A 414-amino-acid chain; its full sequence is Esterase FrsA (414 aa).

It belongs to the FrsA family.

It catalyses the reaction a carboxylic ester + H2O = an alcohol + a carboxylate + H(+). Functionally, catalyzes the hydrolysis of esters. In Shigella sonnei (strain Ss046), this protein is Esterase FrsA.